The sequence spans 448 residues: Exodeoxyribonuclease 7 large subunit (448 aa).

Belongs to the XseA family. As to quaternary structure, heterooligomer composed of large and small subunits.

The protein localises to the cytoplasm. The enzyme catalyses Exonucleolytic cleavage in either 5'- to 3'- or 3'- to 5'-direction to yield nucleoside 5'-phosphates.. Its function is as follows. Bidirectionally degrades single-stranded DNA into large acid-insoluble oligonucleotides, which are then degraded further into small acid-soluble oligonucleotides. The protein is Exodeoxyribonuclease 7 large subunit of Tolumonas auensis (strain DSM 9187 / NBRC 110442 / TA 4).